A 342-amino-acid polypeptide reads, in one-letter code: UDP-N-acetylenolpyruvoylglucosamine reductase (342 aa).

The 171-residue stretch at 13 to 183 folds into the FAD-binding PCMH-type domain; it reads IDHCAKHIVC…VAVGLRLSKQ (171 aa). Arginine 159 is an active-site residue. Catalysis depends on serine 229, which acts as the Proton donor. Glutamate 325 is a catalytic residue.

The protein belongs to the MurB family. Requires FAD as cofactor.

The protein localises to the cytoplasm. The catalysed reaction is UDP-N-acetyl-alpha-D-muramate + NADP(+) = UDP-N-acetyl-3-O-(1-carboxyvinyl)-alpha-D-glucosamine + NADPH + H(+). It functions in the pathway cell wall biogenesis; peptidoglycan biosynthesis. Functionally, cell wall formation. This chain is UDP-N-acetylenolpyruvoylglucosamine reductase, found in Salmonella typhi.